The chain runs to 447 residues: 26S proteasome non-ATPase regulatory subunit 12 (447 aa).

Residues 1–23 form a disordered region; sequence MTIGLEPAVSSKTKDKMEQDLSP. Residues 240–411 form the PCI domain; that stretch reads NYIEIARCYL…GIATFTTTND (172 aa).

It belongs to the proteasome subunit p55 family.

Acts as a regulatory subunit of the 26S proteasome which is involved in the ATP-dependent degradation of ubiquitinated proteins. The protein is 26S proteasome non-ATPase regulatory subunit 12 (psmD12) of Dictyostelium discoideum (Social amoeba).